The following is a 103-amino-acid chain: Small ribosomal subunit protein uS10 (103 aa).

Belongs to the universal ribosomal protein uS10 family. As to quaternary structure, part of the 30S ribosomal subunit.

In terms of biological role, involved in the binding of tRNA to the ribosomes. The sequence is that of Small ribosomal subunit protein uS10 from Saccharophagus degradans (strain 2-40 / ATCC 43961 / DSM 17024).